A 154-amino-acid chain; its full sequence is Calmodulin-like protein 4 (154 aa).

4 consecutive EF-hand domains span residues 7-42 (EQMV…LGLE), 43-78 (PTDQ…KMKD), 80-115 (DGDE…LGEK), and 116-151 (MTDE…AERK). Residues aspartate 20, asparagine 22, aspartate 24, cysteine 26, glutamate 31, aspartate 56, aspartate 58, asparagine 60, glutamate 67, aspartate 93, aspartate 95, asparagine 97, and glutamate 104 each coordinate Ca(2+). At lysine 115 the chain carries N6,N6,N6-trimethyllysine. Aspartate 129, aspartate 131, aspartate 133, glutamine 135, and glutamate 140 together coordinate Ca(2+).

The protein belongs to the calmodulin family.

Functionally, potential calcium sensor. The sequence is that of Calmodulin-like protein 4 (CML4) from Oryza sativa subsp. japonica (Rice).